Reading from the N-terminus, the 250-residue chain is DNA repair protein RecO (250 aa).

It belongs to the RecO family.

Functionally, involved in DNA repair and RecF pathway recombination. In Rhodopseudomonas palustris (strain TIE-1), this protein is DNA repair protein RecO.